A 134-amino-acid polypeptide reads, in one-letter code: Small ribosomal subunit protein uS11 (134 aa).

Disordered regions lie at residues 1-22 (MPPKGRQGAAKKVRRKEKKNVA) and 114-134 (SIQDVTPTPHNGCRPPKRRRV). Residues 9-22 (AAKKVRRKEKKNVA) show a composition bias toward basic residues.

It belongs to the universal ribosomal protein uS11 family. Part of the 30S ribosomal subunit. Interacts with proteins S7 and S18. Binds to IF-3.

Located on the platform of the 30S subunit, it bridges several disparate RNA helices of the 16S rRNA. Forms part of the Shine-Dalgarno cleft in the 70S ribosome. The polypeptide is Small ribosomal subunit protein uS11 (Streptomyces avermitilis (strain ATCC 31267 / DSM 46492 / JCM 5070 / NBRC 14893 / NCIMB 12804 / NRRL 8165 / MA-4680)).